Reading from the N-terminus, the 56-residue chain is MAGKSAREKIKLVSSAGTGHFYTTDKNKRNTPHKLEMKKYDPVVRKHVTYRETKLK.

Belongs to the bacterial ribosomal protein bL33 family.

The sequence is that of Large ribosomal subunit protein bL33 from Halorhodospira halophila (strain DSM 244 / SL1) (Ectothiorhodospira halophila (strain DSM 244 / SL1)).